A 418-amino-acid polypeptide reads, in one-letter code: Serine--tRNA ligase (418 aa).

232–234 (TAE) is a binding site for L-serine. ATP is bound by residues 263–265 (RRE) and valine 279. Residue glutamate 286 coordinates L-serine. ATP is bound at residue 350–353 (EISS). Serine 385 serves as a coordination point for L-serine.

The protein belongs to the class-II aminoacyl-tRNA synthetase family. Type-1 seryl-tRNA synthetase subfamily. In terms of assembly, homodimer. The tRNA molecule binds across the dimer.

It is found in the cytoplasm. The catalysed reaction is tRNA(Ser) + L-serine + ATP = L-seryl-tRNA(Ser) + AMP + diphosphate + H(+). It carries out the reaction tRNA(Sec) + L-serine + ATP = L-seryl-tRNA(Sec) + AMP + diphosphate + H(+). The protein operates within aminoacyl-tRNA biosynthesis; selenocysteinyl-tRNA(Sec) biosynthesis; L-seryl-tRNA(Sec) from L-serine and tRNA(Sec): step 1/1. In terms of biological role, catalyzes the attachment of serine to tRNA(Ser). Is also able to aminoacylate tRNA(Sec) with serine, to form the misacylated tRNA L-seryl-tRNA(Sec), which will be further converted into selenocysteinyl-tRNA(Sec). The polypeptide is Serine--tRNA ligase (Leptospira biflexa serovar Patoc (strain Patoc 1 / Ames)).